A 485-amino-acid chain; its full sequence is NADH-quinone oxidoreductase subunit N (485 aa).

Transmembrane regions (helical) follow at residues 8 to 28 (LIAL…MLGI), 35 to 55 (FINA…LYFV), 78 to 98 (GLVI…LVGY), 104 to 124 (EFYL…SANH), 125 to 145 (LASL…LVGY), 159 to 179 (YMLL…LLYA), 203 to 223 (VLAG…LVPF), 235 to 255 (PAPV…AVVM), 271 to 291 (MVLS…AISQ), 297 to 317 (LLGY…IAVQ), 327 to 347 (GVYL…VSLM), 374 to 394 (AVMT…GFIG), 408 to 427 (WWLT…YYLR), and 449 to 469 (ALTA…LLGV).

The protein belongs to the complex I subunit 2 family. As to quaternary structure, NDH-1 is composed of 13 different subunits. Subunits NuoA, H, J, K, L, M, N constitute the membrane sector of the complex.

Its subcellular location is the cell inner membrane. It catalyses the reaction a quinone + NADH + 5 H(+)(in) = a quinol + NAD(+) + 4 H(+)(out). In terms of biological role, NDH-1 shuttles electrons from NADH, via FMN and iron-sulfur (Fe-S) centers, to quinones in the respiratory chain. The immediate electron acceptor for the enzyme in this species is believed to be ubiquinone. Couples the redox reaction to proton translocation (for every two electrons transferred, four hydrogen ions are translocated across the cytoplasmic membrane), and thus conserves the redox energy in a proton gradient. The chain is NADH-quinone oxidoreductase subunit N from Serratia proteamaculans (strain 568).